The following is a 342-amino-acid chain: Fructose-1,6-bisphosphatase class 1 (342 aa).

Mg(2+) contacts are provided by glutamate 97, aspartate 119, leucine 121, and aspartate 122. Residues 122 to 125, asparagine 215, tyrosine 247, and lysine 280 contribute to the substrate site; that span reads DGSS. Glutamate 286 serves as a coordination point for Mg(2+).

The protein belongs to the FBPase class 1 family. In terms of assembly, homotetramer. Mg(2+) serves as cofactor.

It is found in the cytoplasm. It catalyses the reaction beta-D-fructose 1,6-bisphosphate + H2O = beta-D-fructose 6-phosphate + phosphate. It functions in the pathway carbohydrate biosynthesis; gluconeogenesis. The polypeptide is Fructose-1,6-bisphosphatase class 1 (Leptospira borgpetersenii serovar Hardjo-bovis (strain JB197)).